The sequence spans 430 residues: MRYANSQKYFKTACDLMPGGVNSPARAFSSVESDPLFIKDGSGSKVYDVDDNEYIDYVASYGPLILGHCHPQIRDALKEQIDYGTGYGSPTELENEMAELVIEAVPSIEMVRMVNSGTEATMSALRLARGYTGKNKIVKLTGCYHGHSDSLLIKAGSGVTTLGLPDSPGVPASIAENTITVPYNNLEVMEQVFNKYGDDIAGVILEPVAGNMGVVPPNEGYLEGLRELTSKYGSLLIFDEVMTGFRVSYGGAQAYYGVTPDLTCLGKVIGGGLPVGAYGGKEEIMEYIAPAGSIYQAGTLSGNPIAMRAGIETLKVLRQEGSYDQLESKSKHLAEGLAKVADKNGVSVTINRVGTMVGMYFTEGPVTDFESATSSDNDKFVKYFETMLSEGVYLAPSQFEAMFMSLVHTQEDIEKTIQIADKALSKAAQV.

K267 carries the post-translational modification N6-(pyridoxal phosphate)lysine.

The protein belongs to the class-III pyridoxal-phosphate-dependent aminotransferase family. HemL subfamily. In terms of assembly, homodimer. The cofactor is pyridoxal 5'-phosphate.

It is found in the cytoplasm. It catalyses the reaction (S)-4-amino-5-oxopentanoate = 5-aminolevulinate. It functions in the pathway porphyrin-containing compound metabolism; protoporphyrin-IX biosynthesis; 5-aminolevulinate from L-glutamyl-tRNA(Glu): step 2/2. The polypeptide is Glutamate-1-semialdehyde 2,1-aminomutase (Natranaerobius thermophilus (strain ATCC BAA-1301 / DSM 18059 / JW/NM-WN-LF)).